The following is a 555-amino-acid chain: CTP synthase (555 aa).

Residues 1 to 267 form an amidoligase domain region; sequence MPKFVFVTGG…CKEVLEFLDL (267 aa). Ser-13 is a binding site for CTP. A UTP-binding site is contributed by Ser-13. Residues 14–19 and Asp-71 contribute to the ATP site; that span reads SIGKGI. 2 residues coordinate Mg(2+): Asp-71 and Glu-141. CTP contacts are provided by residues 148–150, 188–193, and Lys-224; these read DIE and KTKPTQ. UTP-binding positions include 188–193 and Lys-224; that span reads KTKPTQ. The Glutamine amidotransferase type-1 domain occupies 292 to 534; sequence KVAVVGKYVQ…IAAAQSRLPR (243 aa). Gly-354 contacts L-glutamine. Residue Cys-381 is the Nucleophile; for glutamine hydrolysis of the active site. Residues 382–385, Glu-405, and Arg-462 contribute to the L-glutamine site; that span reads LGMQ. Catalysis depends on residues His-507 and Glu-509. Residues 532-555 form a disordered region; sequence LPRSPQEALKQTQINSPNQSKNNP. Residues 540–555 show a composition bias toward polar residues; it reads LKQTQINSPNQSKNNP.

This sequence belongs to the CTP synthase family. Homotetramer.

It carries out the reaction UTP + L-glutamine + ATP + H2O = CTP + L-glutamate + ADP + phosphate + 2 H(+). It catalyses the reaction L-glutamine + H2O = L-glutamate + NH4(+). The enzyme catalyses UTP + NH4(+) + ATP = CTP + ADP + phosphate + 2 H(+). Its pathway is pyrimidine metabolism; CTP biosynthesis via de novo pathway; CTP from UDP: step 2/2. Its activity is regulated as follows. Allosterically activated by GTP, when glutamine is the substrate; GTP has no effect on the reaction when ammonia is the substrate. The allosteric effector GTP functions by stabilizing the protein conformation that binds the tetrahedral intermediate(s) formed during glutamine hydrolysis. Inhibited by the product CTP, via allosteric rather than competitive inhibition. Catalyzes the ATP-dependent amination of UTP to CTP with either L-glutamine or ammonia as the source of nitrogen. Regulates intracellular CTP levels through interactions with the four ribonucleotide triphosphates. In Prochlorococcus marinus (strain MIT 9211), this protein is CTP synthase.